The sequence spans 238 residues: MTKKITLVSTPIGNLKDISLRALDTLRDSDIILCEDTRVSQKLLNHYQINNKKLISYHKFNEYKMLDLIDNYLNQGLQICLISDAGVPTISDPGQILVNWAHENDIEVDIIPGANALISAFALSGYKGSFYFGGFLDSKKQQIIKQISLLDPKVSYIFYISPFKLVYTLEIIRDLYGEEIDIFLIKEITKIYQKYYRGTPDKILNNLSAPKGEFTIILKLKEKKSIKKNKYEQFSKVK.

It belongs to the methyltransferase superfamily. RsmI family.

It localises to the cytoplasm. It catalyses the reaction cytidine(1402) in 16S rRNA + S-adenosyl-L-methionine = 2'-O-methylcytidine(1402) in 16S rRNA + S-adenosyl-L-homocysteine + H(+). Its function is as follows. Catalyzes the 2'-O-methylation of the ribose of cytidine 1402 (C1402) in 16S rRNA. This is Ribosomal RNA small subunit methyltransferase I from Mesomycoplasma conjunctivae (strain ATCC 25834 / NCTC 10147 / HRC/581) (Mycoplasma conjunctivae).